The following is a 77-amino-acid chain: Putative defensin-like protein 129 (77 aa).

The first 25 residues, 1 to 25, serve as a signal peptide directing secretion; that stretch reads MTKNTALTIFMVVLVIEMVMEETQG. 4 cysteine pairs are disulfide-bonded: Cys28/Cys77, Cys37/Cys59, Cys42/Cys71, and Cys46/Cys73.

The protein belongs to the DEFL family.

The protein localises to the secreted. The chain is Putative defensin-like protein 129 (LCR13) from Arabidopsis thaliana (Mouse-ear cress).